A 276-amino-acid polypeptide reads, in one-letter code: WIMGHMVNKIEQINEFLDLGANSIEVDIAFDELGYPEYTYHGVPCDCKRYCTKSEKIDDFIEALSAATTPGNPKFRKELTLVVFDLKTGGFDASRMYKSGKAFAELIQFSYWKGSDDAGRAYIVLSLPKLDHYEFIKAFREHFDTSTFKNLLEERVGYDFSGNEDMGLTRVVLNKAGVNDREHVWQGDGITNCILRSLDRVKAAVAIRDSATGYINKVCFWTIQAYSSVRDALNAEVDGIMTNEPGVIANVLKEDAFKDRFRLATYRDNPWETFKR.

Residue His5 is part of the active site. Glu25 and Asp27 together coordinate Mg(2+). Residue His41 is the Nucleophile of the active site. Cystine bridges form between Cys45/Cys51 and Cys47/Cys193. Residue Asp85 coordinates Mg(2+).

The protein belongs to the arthropod phospholipase D family. Class II subfamily. It depends on Mg(2+) as a cofactor. In terms of tissue distribution, expressed by the venom gland.

The protein resides in the secreted. The catalysed reaction is an N-(acyl)-sphingosylphosphocholine = an N-(acyl)-sphingosyl-1,3-cyclic phosphate + choline. It carries out the reaction an N-(acyl)-sphingosylphosphoethanolamine = an N-(acyl)-sphingosyl-1,3-cyclic phosphate + ethanolamine. It catalyses the reaction a 1-acyl-sn-glycero-3-phosphocholine = a 1-acyl-sn-glycero-2,3-cyclic phosphate + choline. The enzyme catalyses a 1-acyl-sn-glycero-3-phosphoethanolamine = a 1-acyl-sn-glycero-2,3-cyclic phosphate + ethanolamine. Functionally, dermonecrotic toxins cleave the phosphodiester linkage between the phosphate and headgroup of certain phospholipids (sphingolipid and lysolipid substrates), forming an alcohol (often choline) and a cyclic phosphate. This toxin acts on sphingomyelin (SM). It may also act on ceramide phosphoethanolamine (CPE), lysophosphatidylcholine (LPC) and lysophosphatidylethanolamine (LPE), but not on lysophosphatidylserine (LPS), and lysophosphatidylglycerol (LPG). It acts by transphosphatidylation, releasing exclusively cyclic phosphate products as second products. Induces dermonecrosis, hemolysis, increased vascular permeability, edema, inflammatory response, and platelet aggregation. The sequence is that of Dermonecrotic toxin LlSicTox-alphaIV2i from Loxosceles laeta (South American recluse spider).